We begin with the raw amino-acid sequence, 368 residues long: Isopentenyl-diphosphate delta-isomerase (368 aa).

7–8 is a substrate binding site; it reads RK. Residues threonine 65, 66-68, serine 96, and asparagine 125 each bind FMN; that span reads GMT. 96–98 serves as a coordination point for substrate; it reads SQR. Residue glutamine 160 participates in substrate binding. Glutamate 161 contacts Mg(2+). FMN contacts are provided by residues lysine 193, serine 218, threonine 223, 275–277, and 296–297; these read GIR and AL.

It belongs to the IPP isomerase type 2 family. Homooctamer. Dimer of tetramers. The cofactor is FMN. It depends on NADPH as a cofactor. Mg(2+) is required as a cofactor.

The protein localises to the cytoplasm. It carries out the reaction isopentenyl diphosphate = dimethylallyl diphosphate. Its function is as follows. Involved in the biosynthesis of isoprenoids. Catalyzes the 1,3-allylic rearrangement of the homoallylic substrate isopentenyl (IPP) to its allylic isomer, dimethylallyl diphosphate (DMAPP). This is Isopentenyl-diphosphate delta-isomerase from Saccharolobus solfataricus (strain ATCC 35092 / DSM 1617 / JCM 11322 / P2) (Sulfolobus solfataricus).